The sequence spans 71 residues: Small ribosomal subunit protein bS21 (71 aa).

This sequence belongs to the bacterial ribosomal protein bS21 family.

In Shewanella sediminis (strain HAW-EB3), this protein is Small ribosomal subunit protein bS21.